The chain runs to 210 residues: Cell wall protein SRL1 (210 aa).

The first 19 residues, 1-19 (MLQSVVFFALLTFASSVSA), serve as a signal peptide directing secretion. Asparagine 23 carries N-linked (GlcNAc...) asparagine glycosylation. 2 disordered regions span residues 80–99 (SLST…HEIT) and 118–142 (LSPS…VKSF). Positions 118–127 (LSPSSTAASV) are enriched in low complexity. A compositionally biased stretch (basic and acidic residues) spans 132 to 141 (SNNKDAKVKS). Residues asparagine 174, asparagine 200, and asparagine 206 are each glycosylated (N-linked (GlcNAc...) asparagine).

The protein resides in the secreted. It is found in the cell wall. Its subcellular location is the cell surface. Its function is as follows. Required to stabilize the cell wall in the absence of multiple GPI-anchored mannoproteins. This chain is Cell wall protein SRL1 (SRL1), found in Saccharomyces cerevisiae (strain ATCC 204508 / S288c) (Baker's yeast).